A 3033-amino-acid polypeptide reads, in one-letter code: Genome polyprotein (3033 aa).

Serine 2 bears the N-acetylserine; by host mark. The interaction with STAT1 stretch occupies residues 2-23 (STNPKPQRKTKRNTNRRPQDVK). Residues 2-58 (STNPKPQRKTKRNTNRRPQDVKFPGGGQIVGGVYLLPRRGPRLGVRATRKTSERSQP) are interaction with EIF2AK2/PKR. An interaction with DDX3X region spans residues 2-59 (STNPKPQRKTKRNTNRRPQDVKFPGGGQIVGGVYLLPRRGPRLGVRATRKTSERSQPR). A disordered region spans residues 2-75 (STNPKPQRKT…PKDRRSTGKS (74 aa)). 2 consecutive short sequence motifs (nuclear localization signal) follow at residues 5–13 (PKPQRKTKR) and 38–43 (PRRGPR). Residues 7-16 (PQRKTKRNTN) show a composition bias toward basic residues. The span at 32–47 (GGVYLLPRRGPRLGVR) shows a compositional bias: low complexity. Serine 53 bears the Phosphoserine; by host mark. Short sequence motifs (nuclear localization signal) lie at residues 58–64 (PRGRRQP) and 66–71 (PKDRRS). 2 positions are modified to phosphoserine; by host: serine 99 and serine 116. The interval 112–152 (PRHRSRNLGRVIDTITCGFADLMGYIPVVGAPVGGVARALA) is important for endoplasmic reticulum and mitochondrial localization. The interaction with APOA2 stretch occupies residues 122–173 (VIDTITCGFADLMGYIPVVGAPVGGVARALAHGVRVLEDGINYATRNLPGCS). The segment at 164-167 (YATR) is important for lipid droplets localization. The propeptide at 178-191 (LLALLSCVTVPVSS) is ER anchor for the core protein, removed in mature form by host signal peptidase. Residues 190–358 (SSVEIRNIST…FGGHWGVVFG (169 aa)) are Lumenal-facing. N-linked (GlcNAc...) asparagine; by host glycosylation is found at asparagine 196 and asparagine 209. The interval 265–296 (IVMAATVCSALYVGDVCGAVMIVSQALIVSPE) is important for fusion. Asparagine 305 is a glycosylation site (N-linked (GlcNAc...) asparagine; by host). The helical transmembrane segment at 359 to 379 (LAYFSMQGAWAKVIAILLLVA) threads the bilayer. At 380–729 (GVDATTYSTG…WEWVVLLFLL (350 aa)) the chain is on the lumenal side. The HVR1 stretch occupies residues 385 to 412 (TYSTGATVGRTVGSFAGLFKLGAQQNVQ). 3 N-linked (GlcNAc...) (high mannose) asparagine; by host glycosylation sites follow: asparagine 417, asparagine 423, and asparagine 430. Disulfide bonds link cysteine 429-cysteine 554, cysteine 452-cysteine 459, cysteine 488-cysteine 496, and cysteine 505-cysteine 510. A glycan (N-linked (GlcNAc...) asparagine; by host) is linked at asparagine 448. Residues 475 to 480 (ETNVTN) are HVR2. Asparagine 477 carries an N-linked (GlcNAc...) asparagine; by host glycan. A CD81-binding 1 region spans residues 482–495 (EDMRPYCWHYPPKP). N-linked (GlcNAc...) asparagine; by host glycosylation is present at asparagine 534. The interval 546–553 (PPRGAWFG) is CD81-binding 2. Asparagine 558 carries N-linked (GlcNAc...) asparagine; by host glycosylation. 4 cysteine pairs are disulfide-bonded: cysteine 566–cysteine 571, cysteine 585–cysteine 589, cysteine 601–cysteine 624, and cysteine 611–cysteine 648. N-linked (GlcNAc...) (high mannose) asparagine; by host glycosylation is found at asparagine 627 and asparagine 649. Cysteine 656 and cysteine 681 form a disulfide bridge. The PKR/eIF2-alpha phosphorylation homology domain (PePHD) stretch occupies residues 664-675 (GQQSPLLHSTTE). The chain crosses the membrane as a helical span at residues 730 to 750 (LADARICACLWMLIILGQAEA). Residues 751–761 (ALEKLIILHSA) lie on the Lumenal side of the membrane. A helical transmembrane segment spans residues 762–782 (SAASANGPLWFFIFFTAAWYL). Over 783 to 786 (KGRV) the chain is Cytoplasmic. The chain crosses the membrane as a helical span at residues 787 to 807 (VPAATYSVLGLWSFLLLVLAL). Residues 808-817 (PQQAYALDAA) are Lumenal-facing. Residues 818-838 (EQGELGLVILMIISIFTLTPA) traverse the membrane as a helical segment. The Cytoplasmic segment spans residues 839–885 (YKILLSRSVWWLSYMLVLAEAQVQQWVPPLEARGGRDGIIWVAVILH). A helical transmembrane segment spans residues 886–906 (PHLVFEVTKWLLAILGSAYLL). The Lumenal portion of the chain corresponds to 907-932 (KASLLRVPYFVRAHALLRVCTLVRHL). The region spanning 907–1030 (KASLLRVPYF…GYTSKGWKLL (124 aa)) is the Peptidase C18 domain. Residues 908–1210 (ASLLRVPYFV…PVESLDIARR (303 aa)) are protease NS2-3. Cysteine 926 is lipidated: S-palmitoyl cysteine; by host. Residues 933 to 953 (AGARYIQMLLITMGRWTGTYI) form a helical membrane-spanning segment. The segment at 933-953 (AGARYIQMLLITMGRWTGTYI) is interaction with host SCPS1. The Cytoplasmic portion of the chain corresponds to 954 to 1661 (YDHLSPLSTW…CMQADLEVMT (708 aa)). Catalysis depends on for protease NS2 activity; shared with dimeric partner residues histidine 956, glutamate 976, and cysteine 997. In terms of domain architecture, Peptidase S29 spans 1031–1212 (APITAYTQQT…ESLDIARRTP (182 aa)). Residues histidine 1087 and aspartate 1111 each act as charge relay system; for serine protease NS3 activity in the active site. The Zn(2+) site is built by cysteine 1127 and cysteine 1129. Serine 1169 functions as the Charge relay system; for serine protease NS3 activity in the catalytic mechanism. Zn(2+) contacts are provided by cysteine 1175 and histidine 1179. In terms of domain architecture, Helicase ATP-binding spans 1221-1373 (PAVPQTYQVG…ANIEEVALGH (153 aa)). Residue 1234–1241 (APTGSGKS) coordinates ATP. Positions 1241 and 1321 each coordinate Mg(2+). Residues 1320–1323 (DECH) carry the DECH box motif. Positions 1490–1502 (QRRGRTGRGRLGT) are RNA-binding. A helical transmembrane segment spans residues 1662-1682 (STWVLAGGVLAAVAAYCLATG). The NS3-binding stretch occupies residues 1683–1694 (CISIIGRIHLND). At 1683–1809 (CISIIGRIHL…ALTSPLPTST (127 aa)) the chain is on the cytoplasmic side. Residues 1810–1830 (TILLNIMGGWLASQIAPPAGA) form a helical membrane-spanning segment. The Lumenal segment spans residues 1831 to 1832 (TG). Residues 1833–1853 (FVVSGLVGAAVGSIGLGKILV) form a helical membrane-spanning segment. A topological domain (cytoplasmic) is located at residue aspartate 1854. Residues 1855 to 1875 (VLAGYGAGISGALVAFKIMSG) form a helical membrane-spanning segment. Topologically, residues 1876-1885 (EKPSVEDVVN) are lumenal. A helical transmembrane segment spans residues 1886–1906 (LLPAILSPGALVVGVICAAIL). At 1907–1976 (RRHVGQGEGA…WITEDCPVPC (70 aa)) the chain is on the cytoplasmic side. Cysteine 1976 carries the S-palmitoyl cysteine; by host lipid modification. Residues 1977–2007 (SGSWLRDIWEWVCSILTDFKNWLSAKLLPKM) lie within the membrane without spanning it. The Cytoplasmic portion of the chain corresponds to 2008–3012 (PGLPFISCQK…FHSVSHARPR (1005 aa)). Positions 2015, 2033, 2035, and 2056 each coordinate Zn(2+). Positions 2124 to 2212 (EFFSWVDGVQ…ASSSASQLSA (89 aa)) are FKBP8-binding. The tract at residues 2124-2332 (EFFSWVDGVQ…PVPPPRRRRA (209 aa)) is transcriptional activation. Residues 2139-2143 (PTPGP) form an interaction with non-structural protein 4A region. Positions 2192–2213 (RRLARGSPPSQASSSASQLSAP) are disordered. Residues 2193–2460 (RLARGSPPSQ…ALITPCGPEE (268 aa)) are interaction with host SKP2. Serine 2198, serine 2201, serine 2205, serine 2208, serine 2211, and serine 2214 each carry phosphoserine; by host. Residues 2198–2213 (SPPSQASSSASQLSAP) show a composition bias toward low complexity. An ISDR region spans residues 2214–2249 (SLKATCTTHKTAYDCDMVDANLFMGGDVTRIESDSK). The interval 2214–2275 (SLKATCTTHK…REPSVPSEYL (62 aa)) is interaction with EIF2AK2/PKR. Positions 2249-2306 (KVIVLDSLDSMTEVEDDREPSVPSEYLTRRRKFPPALPPWARPDYNPPVIETWKRPDY) are NS4B-binding. The V3 stretch occupies residues 2299 to 2377 (ETWKRPDYEP…DTGGDSVQQP (79 aa)). The short motif at 2322–2325 (APVP) is the SH3-binding element. A Nuclear localization signal motif is present at residues 2327–2335 (PRRRRARVL). Lysine 2350 participates in a covalent cross-link: Glycyl lysine isopeptide (Lys-Gly) (interchain with G-Cter in ubiquitin). The interval 2354 to 2431 (PLQDTNDSGH…IDSDSKSWST (78 aa)) is disordered. The segment covering 2355–2391 (LQDTNDSGHSTGADTGGDSVQQPSGETAASDAGSLSS) has biased composition (polar residues). Phosphoserine; by host occurs at positions 2471 and 2484. The RdRp catalytic domain maps to 2656-2774 (PMGFSYDTRC…ISESQGNEED (119 aa)). Mg(2+) is bound by residues aspartate 2662, aspartate 2760, and aspartate 2761. A helical transmembrane segment spans residues 3013-3033 (LLLLCLLLLSVGVGIFLLPAR).

The protein belongs to the hepacivirus polyprotein family. Homooligomer. Interacts with E1 (via C-terminus). Interacts with the non-structural protein 5A. Interacts (via N-terminus) with host STAT1 (via SH2 domain); this interaction results in decreased STAT1 phosphorylation and ubiquitin-mediated proteasome-dependent STAT1 degradation, leading to decreased IFN-stimulated gene transcription. Interacts with host STAT3; this interaction constitutively activates STAT3. Interacts with host LTBR receptor. Interacts with host TNFRSF1A receptor and possibly induces apoptosis. Interacts with host HNRPK. Interacts with host YWHAE. Interacts with host UBE3A/E6AP. Interacts with host DDX3X. Interacts with host APOA2. Interacts with host RXRA protein. Interacts with host SP110 isoform 3/Sp110b; this interaction sequesters the transcriptional corepressor SP110 away from the nucleus. Interacts with host CREB3 nuclear transcription protein; this interaction triggers cell transformation. Interacts with host ACY3. Interacts with host C1QR1. Interacts with host RBM24; this interaction, which enhances the interaction of the mature core protein with 5'-UTR, may inhibit viral translation and favor replication. Interacts with host EIF2AK2/PKR; this interaction induces the autophosphorylation of EIF2AK2. Part of the viral assembly initiation complex composed of NS2, E1, E2, NS3, NS4A, NS5A and the mature core protein. In terms of assembly, forms a heterodimer with envelope glycoprotein E2. Interacts with mature core protein. Interacts with protease NS2. The heterodimer E1/E2 interacts with host CLDN1; this interaction plays a role in viral entry into host cell. Interacts with host SPSB2 (via C-terminus). Part of the viral assembly initiation complex composed of NS2, E1, E2, NS3, NS4A, NS5A and the mature core protein. Interacts with host NEURL3; this interaction prevents E1 binding to glycoprotein E2. As to quaternary structure, forms a heterodimer with envelope glycoprotein E1. Interacts with host CD81 and SCARB1 receptors; these interactions play a role in viral entry into host cell. Interacts with host EIF2AK2/PKR; this interaction inhibits EIF2AK2 and probably allows the virus to evade the innate immune response. Interacts with host CD209/DC-SIGN and CLEC4M/DC-SIGNR. Interact with host SPCS1; this interaction is essential for viral particle assembly. Interacts with protease NS2. The heterodimer E1/E2 interacts with host CLDN1; this interaction plays a role in viral entry into host cell. Part of the viral assembly initiation complex composed of NS2, E1, E2, NS3, NS4A, NS5A and the mature core protein. Interacts with host SLC3A2/4F2hc; the interaction may facilitate viral entry into host cell. Interacts with human PLSCR1. Homohexamer. Homoheptamer. Interacts with protease NS2. In terms of assembly, homodimer. Interacts with host SPCS1; this interaction is essential for viral particle assembly. Interacts with envelope glycoprotein E1. Interacts with envelope glycoprotein E2. Interacts with viroporin p7. Interacts with serine protease/helicase NS3. Part of the replication complex composed of NS2, NS3, NS4A, NS4B, NS5A and the RNA-directed RNA polymerase embedded in an ER-derived membranous web. Part of the viral assembly initiation complex composed of NS2, E1, E2, NS3, NS4A, NS5A and the mature core protein. As to quaternary structure, interacts with protease NS2. Interacts with non-structural protein 4A; this interaction stabilizes the folding of NS3 serine protease. NS3-NS4A interaction is essential for NS3 activation and allows membrane anchorage of the latter. NS3/NS4A complex also prevents phosphorylation of host IRF3, thus preventing the establishment of dsRNA induced antiviral state. Interacts with host MAVS; this interaction leads to the cleavage and inhibition of host MAVS. Interacts with host TICAM1; this interaction leads to the cleavage and inhibition of host TICAM1. Interacts with host TANK-binding kinase/TBK1; this interaction results in the inhibition of the association between TBK1 and IRF3, which leads to the inhibition of IRF3 activation. Interacts with host RBM24. Part of the replication complex composed of NS2, NS3, NS4A, NS4B, NS5A and the RNA-directed RNA polymerase embedded in an ER-derived membranous web. Part of the viral assembly initiation complex composed of NS2, E1, E2, NS3, NS4A, NS5A and the mature core protein. Interacts with NS3 serine protease; this interaction stabilizes the folding of NS3 serine protease. NS3-NS4A interaction is essential for NS3 activation and allows membrane anchorage of the latter. Interacts with non-structural protein 5A (via N-terminus). Part of the replication complex composed of NS2, NS3, NS4A, NS4B, NS5A and the RNA-directed RNA polymerase embedded in an ER-derived membranous web. Part of the viral assembly initiation complex composed of NS2, E1, E2, NS3, NS4A, NS5A and the mature core protein. In terms of assembly, homomultimer. Interacts with non-structural protein NS5A. Interacts with host PLA2G4C; this interaction likely initiates the recruitment of replication complexes to lipid droplets. Interacts with host STING; this interaction disrupts the interaction between STING and TBK1 thereby suppressing the interferon signaling. Part of the replication complex composed of NS2, NS3, NS4A, NS4B, NS5A and the RNA-directed RNA polymerase embedded in an ER-derived membranous web. As to quaternary structure, monomer. Homodimer; dimerization is required for RNA-binding. Interacts with the mature core protein. Interacts (via N-terminus) with non-structural protein 4A. Interacts with non-structural protein 4B. Interacts (via region D2) with RNA-directed RNA polymerase. Part of the viral assembly initiation complex composed of NS2, E1, E2, NS3, NS4A, NS5A and the mature core protein. Part of the replication complex composed of NS2, NS3, NS4A, NS4B, NS5A and the RNA-directed RNA polymerase embedded in an ER-derived membranous web. Interacts with host GRB2. Interacts with host BIN1. Interacts with host PIK3R1. Interacts with host SRCAP. Interacts with host FKBP8. Interacts (via C-terminus) with host VAPB (via MSP domain). Interacts with host EIF2AK2/PKR; this interaction leads to disruption of EIF2AK2 dimerization by NS5A and probably allows the virus to evade the innate immune response. Interacts (via N-terminus) with host PACSIN2 (via N-terminus); this interaction attenuates protein kinase C alpha-mediated phosphorylation of PACSIN2 by disrupting the interaction between PACSIN2 and PRKCA. Interacts (via N-terminus) with host SRC kinase (via SH2 domain). Interacts with most Src-family kinases. Interacts with host IFI27 and SKP2; promotes the ubiquitin-mediated proteasomal degradation of NS5A. Interacts with host GPS2. Interacts with host TNFRSF21; this interaction allows the modulation by the virus of JNK, p38 MAPK, STAT3, and Akt signaling pathways in a DR6-dependent manner. Interacts (via N-terminus) with host CIDEB (via N-terminus); this interaction seems to regulate the association of HCV particles with APOE. Interacts with host CHKA/Choline Kinase-alpha; CHKA bridges host PI4KA and NS5A and potentiates NS5A-stimulated PI4KA activity, which then facilitates the targeting of the ternary complex to the ER for viral replication. Interacts with host SPSB2 (via C-terminus); this interaction targets NS5A for ubiquitination and degradation. Interacts with host RAB18; this interaction may promote the association of NS5A and other replicase components with lipid droplets. Interacts (via region D2) with host PPIA/CYPA; the interaction stimulates RNA-binding ability of NS5A and is dependent on the peptidyl-prolyl cis-trans isomerase activity of PPIA/CYPA. Interacts with host TRIM14; this interaction induces the degradation of NS5A. Homooligomer. Interacts with non-structural protein 5A. Interacts with host VAPB. Interacts with host PRK2/PKN2. Interacts with host HNRNPA1 and SEPT6; these interactions facilitate viral replication. Part of the replication complex composed of NS2, NS3, NS4A, NS4B, NS5A and the RNA-directed RNA polymerase. The cofactor is Zn(2+). Mg(2+) serves as cofactor. Specific enzymatic cleavages in vivo yield mature proteins. The structural proteins, core, E1, E2 and p7 are produced by proteolytic processing by host signal peptidases. The core protein precursor is synthesized as a 23 kDa, which is retained in the ER membrane through the hydrophobic signal peptide. Cleavage by the signal peptidase releases the 21 kDa mature core protein. The cleavage of the core protein precursor occurs between aminoacids 176 and 188 but the exact cleavage site is not known. Some degraded forms of the core protein appear as well during the course of infection. The other proteins (p7, NS2, NS3, NS4A, NS4B, NS5A and NS5B) are cleaved by the viral proteases. Autoprocessing between NS2 and NS3 is mediated by the NS2 cysteine protease catalytic domain and regulated by the NS3 N-terminal domain. Post-translationally, phosphorylated by host PKC and PKA. In terms of processing, ubiquitinated; mediated by UBE3A and leading to core protein subsequent proteasomal degradation. Highly N-glycosylated. Post-translationally, palmitoylation is required for NS2/3 autoprocessing and E2 recruitment to membranes. In terms of processing, palmitoylated. This modification may play a role in its polymerization or in protein-protein interactions. Phosphorylated on serines in a basal form termed p56. p58 is a hyperphosphorylated form of p56. p56 and p58 coexist in the cell in roughly equivalent amounts. Hyperphosphorylation is dependent on the presence of NS4A. Host CSNK1A1/CKI-alpha or RPS6KB1 kinases may be responsible for NS5A phosphorylation. Post-translationally, tyrosine phosphorylation is essential for the interaction with host SRC. In terms of processing, ubiquitinated. Ubiquitination, most probably at Lys-2350, mediated by host IFI27 and SKP2 leads to proteasomal degradation, restricting viral infection. Ubiquitination by host TRIM22 leads to interruption of viral replication. The N-terminus is phosphorylated by host PRK2/PKN2.

The protein resides in the host endoplasmic reticulum membrane. It localises to the host mitochondrion membrane. It is found in the virion. The protein localises to the host cytoplasm. Its subcellular location is the host nucleus. The protein resides in the host lipid droplet. It localises to the virion membrane. It is found in the host mitochondrion. The protein localises to the host cell membrane. Its subcellular location is the host perinuclear region. It carries out the reaction Hydrolysis of four peptide bonds in the viral precursor polyprotein, commonly with Asp or Glu in the P6 position, Cys or Thr in P1 and Ser or Ala in P1'.. It catalyses the reaction a ribonucleoside 5'-triphosphate + H2O = a ribonucleoside 5'-diphosphate + phosphate + H(+). The catalysed reaction is ATP + H2O = ADP + phosphate + H(+). The enzyme catalyses RNA(n) + a ribonucleoside 5'-triphosphate = RNA(n+1) + diphosphate. Inhibited by the antiviral drug hexamethylene amiloride. Inhibition by amantadine appears to be genotype-dependent. Also inhibited by long-alkyl-chain iminosugar derivatives. With respect to regulation, activity is up-regulated by PRK2/PKN2-mediated phosphorylation. Functionally, packages viral RNA to form a viral nucleocapsid, and promotes virion budding. Participates in the viral particle production as a result of its interaction with the non-structural protein 5A. Binds RNA and may function as a RNA chaperone to induce the RNA structural rearrangements taking place during virus replication. Modulates viral translation initiation by interacting with viral IRES and 40S ribosomal subunit. Affects various cell signaling pathways, host immunity and lipid metabolism. Prevents the establishment of cellular antiviral state by blocking the interferon-alpha/beta (IFN-alpha/beta) and IFN-gamma signaling pathways and by blocking the formation of phosphorylated STAT1 and promoting ubiquitin-mediated proteasome-dependent degradation of STAT1. Activates STAT3 leading to cellular transformation. Regulates the activity of cellular genes, including c-myc and c-fos. May repress the promoter of p53, and sequester CREB3 and SP110 isoform 3/Sp110b in the cytoplasm. Represses cell cycle negative regulating factor CDKN1A, thereby interrupting an important check point of normal cell cycle regulation. Targets transcription factors involved in the regulation of inflammatory responses and in the immune response: suppresses TNF-induced NF-kappa-B activation, and activates AP-1. Binds to dendritic cells (DCs) via C1QR1, resulting in down-regulation of T-lymphocytes proliferation. Alters lipid metabolism by interacting with hepatocellular proteins involved in lipid accumulation and storage. Induces up-regulation of FAS promoter activity, and thereby contributes to the increased triglyceride accumulation in hepatocytes (steatosis). In terms of biological role, forms a heterodimer with envelope glycoprotein E2, which mediates virus attachment to the host cell, virion internalization through clathrin-dependent endocytosis and fusion with host membrane. Fusion with the host cell is most likely mediated by both E1 and E2, through conformational rearrangements of the heterodimer required for fusion rather than a classical class II fusion mechanism. E1/E2 heterodimer binds host apolipoproteins such as APOB and ApoE thereby forming a lipo-viro-particle (LVP). APOE associated to the LVP allows the initial virus attachment to cell surface receptors such as the heparan sulfate proteoglycans (HSPGs), syndecan-1 (SDC1), syndecan-1 (SDC2), the low-density lipoprotein receptor (LDLR) and scavenger receptor class B type I (SCARB1). The cholesterol transfer activity of SCARB1 allows E2 exposure and binding of E2 to SCARB1 and the tetraspanin CD81. E1/E2 heterodimer binding on CD81 activates the epithelial growth factor receptor (EGFR) signaling pathway. Diffusion of the complex E1-E2-EGFR-SCARB1-CD81 to the cell lateral membrane allows further interaction with Claudin 1 (CLDN1) and occludin (OCLN) to finally trigger HCV entry. Its function is as follows. Forms a heterodimer with envelope glycoprotein E1, which mediates virus attachment to the host cell, virion internalization through clathrin-dependent endocytosis and fusion with host membrane. Fusion with the host cell is most likely mediated by both E1 and E2, through conformational rearrangements of the heterodimer required for fusion rather than a classical class II fusion mechanism. The interaction between envelope glycoprotein E2 and host apolipoprotein E/APOE allows the proper assembly, maturation and infectivity of the viral particles. This interaction is probably promoted via the up-regulation of cellular autophagy by the virus. E1/E2 heterodimer binds host apolipoproteins such as APOB and APOE thereby forming a lipo-viro-particle (LVP). APOE associated to the LVP allows the initial virus attachment to cell surface receptors such as the heparan sulfate proteoglycans (HSPGs), syndecan-1 (SDC1), syndecan-1 (SDC2), the low-density lipoprotein receptor (LDLR) and scavenger receptor class B type I (SCARB1). The cholesterol transfer activity of SCARB1 allows E2 exposure and binding of E2 to SCARB1 and the tetraspanin CD81. E1/E2 heterodimer binding on CD81 activates the epithelial growth factor receptor (EGFR) signaling pathway. Diffusion of the complex E1-E2-EGFR-SCARB1-CD81 to the cell lateral membrane allows further interaction with Claudin 1 (CLDN1) and occludin (OCLN) to finally trigger HCV entry. Inhibits host EIF2AK2/PKR activation, preventing the establishment of an antiviral state. Viral ligand for CD209/DC-SIGN and CLEC4M/DC-SIGNR, which are respectively found on dendritic cells (DCs), and on liver sinusoidal endothelial cells and macrophage-like cells of lymph node sinuses. These interactions allow the capture of circulating HCV particles by these cells and subsequent facilitated transmission to permissive cells such as hepatocytes and lymphocyte subpopulations. The interaction between E2 and host amino acid transporter complex formed by SLC3A2 and SLC7A5/LAT1 may facilitate viral entry into host cell. Ion channel protein that acts as a viroporin and plays an essential role in the assembly, envelopment and secretion of viral particles. Regulates the host cell secretory pathway, which induces the intracellular retention of viral glycoproteins and favors assembly of viral particles. Creates a pore in acidic organelles and releases Ca(2+) and H(+) in the cytoplasm of infected cells, leading to a productive viral infection. High levels of cytoplasmic Ca(2+) may trigger membrane trafficking and transport of viral ER-associated proteins to viroplasms, sites of viral genome replication. This ionic imbalance induces the assembly of the inflammasome complex, which triggers the maturation of pro-IL-1beta into IL-1beta through the action of caspase-1. Targets also host mitochondria and induces mitochondrial depolarization. In addition of its role as a viroporin, acts as a lipid raft adhesion factor. Functionally, cysteine protease required for the proteolytic auto-cleavage between the non-structural proteins NS2 and NS3. The N-terminus of NS3 is required for the function of NS2 protease (active region NS2-3). Promotes the initiation of viral particle assembly by mediating the interaction between structural and non-structural proteins. In terms of biological role, displays three enzymatic activities: serine protease with a chymotrypsin-like fold, NTPase and RNA helicase. NS3 serine protease, in association with NS4A, is responsible for the cleavages of NS3-NS4A, NS4A-NS4B, NS4B-NS5A and NS5A-NS5B. The NS3/NS4A complex prevents phosphorylation of host IRF3, thus preventing the establishment of dsRNA induced antiviral state. The NS3/NS4A complex induces host amino acid transporter component SLC3A2, thus contributing to HCV propagation. NS3 RNA helicase binds to RNA and unwinds both dsDNA and dsRNA in the 3' to 5' direction, and likely resolves RNA complicated stable secondary structures in the template strand. Binds a single ATP and catalyzes the unzipping of a single base pair of dsRNA. Inhibits host antiviral proteins TBK1 and IRF3 thereby preventing the establishment of an antiviral state. Cleaves host MAVS/CARDIF thereby preventing the establishment of an antiviral state. Cleaves host TICAM1/TRIF, thereby disrupting TLR3 signaling and preventing the establishment of an antiviral state. Its function is as follows. Induces a specific membrane alteration that serves as a scaffold for the virus replication complex. This membrane alteration gives rise to the so-called ER-derived membranous web that contains the replication complex. NS4B self-interaction contributes to its function in membranous web formation. Promotes host TRIF protein degradation in a CASP8-dependent manner thereby inhibiting host TLR3-mediated interferon signaling. Disrupts the interaction between STING and TBK1 contributing to the inhibition of interferon signaling. Phosphorylated protein that is indispensable for viral replication and assembly. Both hypo- and hyperphosphorylated states are required for the viral life cycle. The hyperphosphorylated form of NS5A is an inhibitor of viral replication. Involved in RNA-binding and especially in binding to the viral genome. Zinc is essential for RNA-binding. Participates in the viral particle production as a result of its interaction with the mature viral core protein. Its interaction with host VAPB may target the viral replication complex to vesicles. Down-regulates viral IRES translation initiation. Mediates interferon resistance, presumably by interacting with and inhibiting host EIF2AK2/PKR. Prevents BIN1-induced apoptosis. Acts as a transcriptional activator of some host genes important for viral replication when localized in the nucleus. Via the interaction with host PACSIN2, modulates lipid droplet formation in order to promote virion assembly. Modulates TNFRSF21/DR6 signaling pathway for viral propagation. Functionally, RNA-dependent RNA polymerase that performs primer-template recognition and RNA synthesis during viral replication. Initiates RNA transcription/replication at a flavin adenine dinucleotide (FAD), resulting in a 5'- FAD cap on viral RNAs. In this way, recognition of viral 5' RNA by host pattern recognition receptors can be bypassed, thereby evading activation of antiviral pathways. The chain is Genome polyprotein from Hepatitis C virus genotype 2b (isolate JPUT971017) (HCV).